We begin with the raw amino-acid sequence, 34 residues long: Photosystem II reaction center protein M (34 aa).

A helical transmembrane segment spans residues 5–25 (ILALIAVALFISIPTAFLVII).

The protein belongs to the PsbM family. As to quaternary structure, PSII is composed of 1 copy each of membrane proteins PsbA, PsbB, PsbC, PsbD, PsbE, PsbF, PsbH, PsbI, PsbJ, PsbK, PsbL, PsbM, PsbT, PsbX, PsbY, PsbZ, Psb30/Ycf12, at least 3 peripheral proteins of the oxygen-evolving complex and a large number of cofactors. It forms dimeric complexes.

Its subcellular location is the plastid. The protein localises to the chloroplast thylakoid membrane. Its function is as follows. One of the components of the core complex of photosystem II (PSII). PSII is a light-driven water:plastoquinone oxidoreductase that uses light energy to abstract electrons from H(2)O, generating O(2) and a proton gradient subsequently used for ATP formation. It consists of a core antenna complex that captures photons, and an electron transfer chain that converts photonic excitation into a charge separation. This subunit is found at the monomer-monomer interface. This chain is Photosystem II reaction center protein M, found in Welwitschia mirabilis (Tree tumbo).